Consider the following 209-residue polypeptide: Cilia- and flagella-associated protein 418 (209 aa).

Residues 1 to 76 (MAKDLDELLD…LINEIFEEPD (76 aa)) are required for interaction with FAM161A. Residues 24 to 58 (LDLGERPKGDGGGGSHSGDRNGAQEKETLRSTETF) are disordered. Over residues 40–58 (SGDRNGAQEKETLRSTETF) the composition is skewed to basic and acidic residues.

As to quaternary structure, interacts (via N-terminus) with FAM161A (via central region); the interaction is direct. Expressed in multiple tissues, including the brain, kidney, lung, spleen, heart, trachea and testis. Expressed in the retina (at protein level).

Its subcellular location is the cytoplasm. The protein resides in the photoreceptor inner segment. May be involved in photoreceptor outer segment disk morphogenesis. The sequence is that of Cilia- and flagella-associated protein 418 from Mus musculus (Mouse).